Reading from the N-terminus, the 507-residue chain is Probable cytosol aminopeptidase (507 aa).

Mn(2+) is bound by residues lysine 275 and aspartate 280. Lysine 287 is a catalytic residue. Residues aspartate 298, aspartate 357, and glutamate 359 each coordinate Mn(2+). The active site involves arginine 361.

It belongs to the peptidase M17 family. It depends on Mn(2+) as a cofactor.

The protein localises to the cytoplasm. It catalyses the reaction Release of an N-terminal amino acid, Xaa-|-Yaa-, in which Xaa is preferably Leu, but may be other amino acids including Pro although not Arg or Lys, and Yaa may be Pro. Amino acid amides and methyl esters are also readily hydrolyzed, but rates on arylamides are exceedingly low.. The enzyme catalyses Release of an N-terminal amino acid, preferentially leucine, but not glutamic or aspartic acids.. In terms of biological role, presumably involved in the processing and regular turnover of intracellular proteins. Catalyzes the removal of unsubstituted N-terminal amino acids from various peptides. This Rhodopirellula baltica (strain DSM 10527 / NCIMB 13988 / SH1) protein is Probable cytosol aminopeptidase.